The primary structure comprises 513 residues: Noroxomaritidine synthase 2 (513 aa).

The helical transmembrane segment at 14–34 (HYPEILIAIACFLIFSLLLSA) threads the bilayer. Cysteine 458 lines the heme pocket.

Belongs to the cytochrome P450 family. Heme is required as a cofactor. As to expression, mostly expressed in stems, and, to a lower extent, in bulbs, roots, leaves and flowers.

The protein resides in the membrane. It carries out the reaction 4'-O-methylnorbelladine + reduced [NADPH--hemoprotein reductase] + O2 = (10bR,4aS)-noroxomaritidine + oxidized [NADPH--hemoprotein reductase] + 2 H2O + H(+). The enzyme catalyses 4'-O-methylnorbelladine + reduced [NADPH--hemoprotein reductase] + O2 = (10bS,4aR)-noroxomaritidine + oxidized [NADPH--hemoprotein reductase] + 2 H2O + H(+). The protein operates within alkaloid biosynthesis. In terms of biological role, cytochrome P450 that catalyzes an intramolecular para-para' C-C phenol coupling of 4'-O-methylnorbelladine in alkaloids biosynthesis, including haemanthamine- and crinamine-type alkaloids, promising anticancer agents. Catalyzes the formation of (10bR,4aS)-noroxomaritidine and (10bS,4aR)-noroxomaritidine from 4'-O-methylnorbelladine. The sequence is that of Noroxomaritidine synthase 2 from Narcissus pseudonarcissus (Daffodil).